The chain runs to 268 residues: MSDWQMAEAWTLEEAIANIQQTEDTGKRYYAAWWFGKFRVQDERAVNALLAALKDETDRSPDGGYPLRRNAAKALGKLGNLAAVQPLIESLESPDYYVRESAAQSLEMLGDRQAIPALQALLAGGVAAAVKAEGKPHLVQPYEAVIEALGTIGATAAIAEIEPFLDHEFAKIRYAALRALYQLTQEAHYAEQLMEALNGNQLQLRRSALLDLGAIGYVPAGQAIAKAYAENSLKLISLKGILESHLQRTAETLDADGLQLLELMDSLL.

The protein belongs to the CpcE/RpcE/PecE family. As to quaternary structure, cpcE and CpcF associate to form a lyase.

Its function is as follows. Required for the chromophorylation of the cpcA gene product. The protein is Phycocyanobilin lyase subunit alpha (cpcE) of Picosynechococcus sp. (strain ATCC 27264 / PCC 7002 / PR-6) (Agmenellum quadruplicatum).